Consider the following 394-residue polypeptide: Phosphopentomutase (394 aa).

Mn(2+) contacts are provided by Asp-14, Asp-287, His-292, Asp-328, His-329, and His-340.

This sequence belongs to the phosphopentomutase family. The cofactor is Mn(2+).

It is found in the cytoplasm. It carries out the reaction 2-deoxy-alpha-D-ribose 1-phosphate = 2-deoxy-D-ribose 5-phosphate. The enzyme catalyses alpha-D-ribose 1-phosphate = D-ribose 5-phosphate. Its pathway is carbohydrate degradation; 2-deoxy-D-ribose 1-phosphate degradation; D-glyceraldehyde 3-phosphate and acetaldehyde from 2-deoxy-alpha-D-ribose 1-phosphate: step 1/2. Functionally, isomerase that catalyzes the conversion of deoxy-ribose 1-phosphate (dRib-1-P) and ribose 1-phosphate (Rib-1-P) to deoxy-ribose 5-phosphate (dRib-5-P) and ribose 5-phosphate (Rib-5-P), respectively. This is Phosphopentomutase from Listeria monocytogenes serotype 4b (strain CLIP80459).